Consider the following 397-residue polypeptide: Acetate kinase (397 aa).

Asparagine 8 lines the Mg(2+) pocket. Lysine 15 contributes to the ATP binding site. Arginine 89 contributes to the substrate binding site. Aspartate 146 functions as the Proton donor/acceptor in the catalytic mechanism. Residues 206-210 (HLGNG), 281-283 (DLR), and 329-333 (GVGEN) contribute to the ATP site. Glutamate 382 is a binding site for Mg(2+).

Belongs to the acetokinase family. As to quaternary structure, homodimer. Requires Mg(2+) as cofactor. Mn(2+) is required as a cofactor.

It is found in the cytoplasm. It carries out the reaction acetate + ATP = acetyl phosphate + ADP. It participates in metabolic intermediate biosynthesis; acetyl-CoA biosynthesis; acetyl-CoA from acetate: step 1/2. Catalyzes the formation of acetyl phosphate from acetate and ATP. Can also catalyze the reverse reaction. In Bacillus cereus (strain ATCC 14579 / DSM 31 / CCUG 7414 / JCM 2152 / NBRC 15305 / NCIMB 9373 / NCTC 2599 / NRRL B-3711), this protein is Acetate kinase.